Here is a 118-residue protein sequence, read N- to C-terminus: Ribosome-binding factor A (118 aa).

This sequence belongs to the RbfA family. In terms of assembly, monomer. Binds 30S ribosomal subunits, but not 50S ribosomal subunits or 70S ribosomes.

The protein resides in the cytoplasm. In terms of biological role, one of several proteins that assist in the late maturation steps of the functional core of the 30S ribosomal subunit. Associates with free 30S ribosomal subunits (but not with 30S subunits that are part of 70S ribosomes or polysomes). Required for efficient processing of 16S rRNA. May interact with the 5'-terminal helix region of 16S rRNA. The polypeptide is Ribosome-binding factor A (Clostridium beijerinckii (strain ATCC 51743 / NCIMB 8052) (Clostridium acetobutylicum)).